Here is a 361-residue protein sequence, read N- to C-terminus: Mycothiol acetyltransferase (361 aa).

N-acetyltransferase domains lie at 25–173 (PRVR…LPGS) and 195–361 (VTVL…AWKF). Residue Glu-59 coordinates 1D-myo-inositol 2-(L-cysteinylamino)-2-deoxy-alpha-D-glucopyranoside. 98–100 (LAV) lines the acetyl-CoA pocket. 1D-myo-inositol 2-(L-cysteinylamino)-2-deoxy-alpha-D-glucopyranoside is bound by residues Glu-229, Lys-280, and Glu-295. Acetyl-CoA-binding positions include 299 to 301 (IGL) and 306 to 312 (QGRGLGR). Tyr-333 is a binding site for 1D-myo-inositol 2-(L-cysteinylamino)-2-deoxy-alpha-D-glucopyranoside. Position 338 to 343 (338 to 343 (NAPAVH)) interacts with acetyl-CoA.

This sequence belongs to the acetyltransferase family. MshD subfamily. As to quaternary structure, monomer.

It catalyses the reaction 1D-myo-inositol 2-(L-cysteinylamino)-2-deoxy-alpha-D-glucopyranoside + acetyl-CoA = mycothiol + CoA + H(+). Catalyzes the transfer of acetyl from acetyl-CoA to desacetylmycothiol (Cys-GlcN-Ins) to form mycothiol. The sequence is that of Mycothiol acetyltransferase from Corynebacterium kroppenstedtii (strain DSM 44385 / JCM 11950 / CIP 105744 / CCUG 35717).